The chain runs to 190 residues: Flavodoxin-like domain-containing protein BilS (190 aa).

Its pathway is porphyrin-containing compound metabolism; protoheme degradation. Its function is as follows. Together with BilR, catalyzes reduction of mesobilirubin and/or bilirubin to urobilinogen, a key step during heme degradation. BilS is probably involved in electron transfer for the bilirubin reductase BilR. This chain is Flavodoxin-like domain-containing protein BilS, found in Clostridium symbiosum (strain WAL-14163).